The following is a 157-amino-acid chain: MLTNKEIKQLIWEKADNVASKLGLEIFDILIKGSNKNKILEVVIDKADGYVSIGDCERFSKAFDPWLDEIDLFDKSYELVVSSPGLDRKLRGKADYERFKGKLAKFILKGKETKHPVVIGYIDEILEDQIKITEKDSGKLFNIDLNEIDKANLEIEL.

Belongs to the RimP family.

It localises to the cytoplasm. Its function is as follows. Required for maturation of 30S ribosomal subunits. This chain is Ribosome maturation factor RimP, found in Petrotoga mobilis (strain DSM 10674 / SJ95).